A 164-amino-acid chain; its full sequence is MKGILDSILRVGRMIFAPTKTVQYPEEKLPLAPRTRGRIVLTRDPDGQERCVACNLCAAACPVDCIDVVKAETPDGRWYPESFRINFARCIFCGYCEEACPTSAIQLTPDVELADYRRGFLQYEKEDLLISGEGKHPGYRYWDVAGKAIAGKAQDPVDPKDLCP.

2 4Fe-4S ferredoxin-type domains span residues 39-71 and 81-110; these read IVLT…VVKA and ESFR…LTPD. Residues Cys-51, Cys-54, Cys-57, Cys-61, Cys-90, Cys-93, Cys-96, and Cys-100 each contribute to the [4Fe-4S] cluster site.

This sequence belongs to the complex I 23 kDa subunit family. NDH-1 is composed of 14 different subunits. Subunits NuoA, H, J, K, L, M, N constitute the membrane sector of the complex. [4Fe-4S] cluster is required as a cofactor.

The protein resides in the cell inner membrane. The catalysed reaction is a quinone + NADH + 5 H(+)(in) = a quinol + NAD(+) + 4 H(+)(out). In terms of biological role, NDH-1 shuttles electrons from NADH, via FMN and iron-sulfur (Fe-S) centers, to quinones in the respiratory chain. The immediate electron acceptor for the enzyme in this species is believed to be ubiquinone. Couples the redox reaction to proton translocation (for every two electrons transferred, four hydrogen ions are translocated across the cytoplasmic membrane), and thus conserves the redox energy in a proton gradient. The polypeptide is NADH-quinone oxidoreductase subunit I 2 (Cereibacter sphaeroides (strain ATCC 17023 / DSM 158 / JCM 6121 / CCUG 31486 / LMG 2827 / NBRC 12203 / NCIMB 8253 / ATH 2.4.1.) (Rhodobacter sphaeroides)).